Reading from the N-terminus, the 383-residue chain is Cell division protein FtsZ (383 aa).

GTP contacts are provided by residues 20-24 (GGGGN), 107-109 (GTG), Glu-138, Arg-142, and Asn-186.

Belongs to the FtsZ family. Homodimer. Polymerizes to form a dynamic ring structure in a strictly GTP-dependent manner. Interacts directly with several other division proteins.

The protein resides in the cytoplasm. Functionally, essential cell division protein that forms a contractile ring structure (Z ring) at the future cell division site. The regulation of the ring assembly controls the timing and the location of cell division. One of the functions of the FtsZ ring is to recruit other cell division proteins to the septum to produce a new cell wall between the dividing cells. Binds GTP and shows GTPase activity. This chain is Cell division protein FtsZ, found in Escherichia coli O157:H7.